The primary structure comprises 499 residues: Glutamyl-tRNA(Gln) amidotransferase subunit A (499 aa).

Residues lysine 79 and serine 159 each act as charge relay system in the active site. Catalysis depends on serine 183, which acts as the Acyl-ester intermediate.

The protein belongs to the amidase family. GatA subfamily. Heterotrimer of A, B and C subunits.

It catalyses the reaction L-glutamyl-tRNA(Gln) + L-glutamine + ATP + H2O = L-glutaminyl-tRNA(Gln) + L-glutamate + ADP + phosphate + H(+). Allows the formation of correctly charged Gln-tRNA(Gln) through the transamidation of misacylated Glu-tRNA(Gln) in organisms which lack glutaminyl-tRNA synthetase. The reaction takes place in the presence of glutamine and ATP through an activated gamma-phospho-Glu-tRNA(Gln). This is Glutamyl-tRNA(Gln) amidotransferase subunit A from Granulibacter bethesdensis (strain ATCC BAA-1260 / CGDNIH1).